The primary structure comprises 79 residues: MSAPDKEKEKEKEETNNKSEDLGLLEEDDEFEEFPAEDFRVGDDEEELNVWEDNWDDDNVEDDFSQQLKAHLESKKMET.

Residues Met1–Asp21 show a composition bias toward basic and acidic residues. A disordered region spans residues Met1 to Glu30. Position 19 is a phosphoserine (Ser19).

Belongs to the DSS1/SEM1 family. In terms of assembly, part of the 26S proteasome.

Its function is as follows. Subunit of the 26S proteasome which plays a role in ubiquitin-dependent proteolysis. The protein is Probable 26S proteasome complex subunit sem1 of Drosophila melanogaster (Fruit fly).